We begin with the raw amino-acid sequence, 546 residues long: Glucose-6-phosphate isomerase (546 aa).

The active-site Proton donor is Glu357. Residues His389 and Lys509 contribute to the active site.

This sequence belongs to the GPI family.

The protein localises to the cytoplasm. It carries out the reaction alpha-D-glucose 6-phosphate = beta-D-fructose 6-phosphate. The protein operates within carbohydrate biosynthesis; gluconeogenesis. It functions in the pathway carbohydrate degradation; glycolysis; D-glyceraldehyde 3-phosphate and glycerone phosphate from D-glucose: step 2/4. Catalyzes the reversible isomerization of glucose-6-phosphate to fructose-6-phosphate. This Anaeromyxobacter dehalogenans (strain 2CP-1 / ATCC BAA-258) protein is Glucose-6-phosphate isomerase.